The following is a 732-amino-acid chain: 1,4-alpha-glucan branching enzyme GlgB (732 aa).

Residue Asp415 is the Nucleophile of the active site. Glu468 functions as the Proton donor in the catalytic mechanism.

It belongs to the glycosyl hydrolase 13 family. GlgB subfamily. As to quaternary structure, monomer.

It carries out the reaction Transfers a segment of a (1-&gt;4)-alpha-D-glucan chain to a primary hydroxy group in a similar glucan chain.. It participates in glycan biosynthesis; glycogen biosynthesis. Its function is as follows. Catalyzes the formation of the alpha-1,6-glucosidic linkages in glycogen by scission of a 1,4-alpha-linked oligosaccharide from growing alpha-1,4-glucan chains and the subsequent attachment of the oligosaccharide to the alpha-1,6 position. This chain is 1,4-alpha-glucan branching enzyme GlgB, found in Nitrosomonas eutropha (strain DSM 101675 / C91 / Nm57).